A 128-amino-acid polypeptide reads, in one-letter code: Riboflavin kinase (128 aa).

Residue 12 to 17 (GKGEGK) participates in CDP binding. Mg(2+)-binding residues include Thr-41 and Asn-43. 2 residues coordinate FMN: Thr-97 and Glu-105. 110 to 113 (IKLR) contributes to the CDP binding site.

The protein belongs to the archaeal riboflavin kinase family. Requires Mg(2+) as cofactor.

It carries out the reaction riboflavin + CTP = CDP + FMN + H(+). It functions in the pathway cofactor biosynthesis; FMN biosynthesis; FMN from riboflavin (CTP route): step 1/1. In terms of biological role, catalyzes the CTP-dependent phosphorylation of riboflavin (vitamin B2) to form flavin mononucleotide (FMN). This chain is Riboflavin kinase, found in Methanococcus aeolicus (strain ATCC BAA-1280 / DSM 17508 / OCM 812 / Nankai-3).